The following is a 363-amino-acid chain: G-protein coupled receptor 4 (363 aa).

The Extracellular segment spans residues 1 to 8 (MGNGTWEG). Asn-3 carries an N-linked (GlcNAc...) asparagine glycan. Residues 9-45 (CHVDSRVDHLFPPSLYIFVIGVGLPTNCLALWAAYRQ) traverse the membrane as a helical segment. Cystine bridges form between Cys-9–Cys-258 and Cys-90–Cys-168. Topologically, residues 46 to 49 (VRQR) are cytoplasmic. The chain crosses the membrane as a helical span at residues 50–80 (NELGVYLMNLSIADLLYICTLPLWVDYFLHH). The Extracellular segment spans residues 81–85 (DNWIH). The chain crosses the membrane as a helical span at residues 86-121 (GPGSCKLFGFIFYTNIYISIAFLCCISVDRYLAVAH). Residues 122–129 (PLRFARLR) lie on the Cytoplasmic side of the membrane. Residues 130-156 (RVKTAVAVSSVVWATELGANSVPLFHD) form a helical membrane-spanning segment. The Extracellular portion of the chain corresponds to 157–172 (ELFRDRYNHTFCFEKF). An extracellular loop 2 (ECL2) region spans residues 157–172 (ELFRDRYNHTFCFEKF). Residue Asn-164 is glycosylated (N-linked (GlcNAc...) asparagine). The chain crosses the membrane as a helical span at residues 173–210 (PMEGWVAWMNLYRVFVGFLFPWALMLLSYRGILRAVRG). Residues 211–214 (SVST) lie on the Cytoplasmic side of the membrane. Residues 215–250 (ERQEKAKIKRLALSLIAIVLVCFAPYHVLLLSRSAV) form a helical membrane-spanning segment. Over 251–260 (YLGHPWDCGF) the chain is Extracellular. The chain crosses the membrane as a helical span at residues 261–289 (EERVFSAYHSSLAFTSLNCVADPILYCLV). The Cytoplasmic segment spans residues 290-363 (NEGARSDVAK…QLKMLPPPAP (74 aa)). A disordered region spans residues 344 to 363 (ASPPSQGDQVQLKMLPPPAP).

The protein belongs to the G-protein coupled receptor 1 family.

Its subcellular location is the cell membrane. Activated by a network of residues that connects an extracellular-facing cavity to Glu-145, a conserved charged residue buried in the transmembrane core of the receptor. Protonation likely drives conformational changes in extracellular loop 2 (ECL2), which stabilizes movement of transmembrane 3 (TM3) and a series of rearrangements that connect the extracellular-facing cavity to Glu-145, a residue only conserved in proton-sensing G-protein coupled receptors. Proton-sensing G-protein coupled receptor activated by extracellular pH, which is required to monitor pH changes and generate adaptive reactions. Activated by an optimal pH of 6.8-7.2. Ligand binding causes a conformation change that triggers signaling via guanine nucleotide-binding proteins (G proteins) and modulates the activity of downstream effectors, such as adenylate cyclase. GPR4 is mainly coupled to G(s) G proteins and mediates activation of adenylate cyclase activity. May also couple with G(q) and G(12)/G(13) G proteins. Acts as a key regulator of respiratory sensitivity to CO2/H(+) in brain retrotrapezoid nucleus neurons: acts by mediating detection of protons generated by the formation of carbonic acid in the blood, an important mechanism to impulse to breathe. Also acts as a regulator of acid secretion in the kidney collecting duct by maintaining acid-base homeostasis in the kidney. Acidosis-induced GPR4 activation increases paracellular gap formation and permeability of vascular endothelial cells, possibly through the G(12)/G(13)/Rho GTPase signaling pathway. The polypeptide is G-protein coupled receptor 4 (GPR4) (Sus scrofa (Pig)).